The chain runs to 124 residues: Small ribosomal subunit protein uS13 (124 aa).

Over residues 92–117 the composition is skewed to basic residues; sequence RRGLPVRGQRTKSNARTRKGPRKTVA. Residues 92 to 124 form a disordered region; sequence RRGLPVRGQRTKSNARTRKGPRKTVANKKIESK.

It belongs to the universal ribosomal protein uS13 family. In terms of assembly, part of the 30S ribosomal subunit. Forms a loose heterodimer with protein S19. Forms two bridges to the 50S subunit in the 70S ribosome.

Its function is as follows. Located at the top of the head of the 30S subunit, it contacts several helices of the 16S rRNA. In the 70S ribosome it contacts the 23S rRNA (bridge B1a) and protein L5 of the 50S subunit (bridge B1b), connecting the 2 subunits; these bridges are implicated in subunit movement. Contacts the tRNAs in the A and P-sites. The polypeptide is Small ribosomal subunit protein uS13 (Mycoplasmoides gallisepticum (strain R(low / passage 15 / clone 2)) (Mycoplasma gallisepticum)).